The following is a 206-amino-acid chain: FMN-dependent NADH:quinone oxidoreductase (206 aa).

Residues Ser-9, Ser-15–Ser-17, Met-95–Phe-98, and Ser-139–Gly-142 each bind FMN.

This sequence belongs to the azoreductase type 1 family. In terms of assembly, homodimer. It depends on FMN as a cofactor.

The catalysed reaction is 2 a quinone + NADH + H(+) = 2 a 1,4-benzosemiquinone + NAD(+). It catalyses the reaction N,N-dimethyl-1,4-phenylenediamine + anthranilate + 2 NAD(+) = 2-(4-dimethylaminophenyl)diazenylbenzoate + 2 NADH + 2 H(+). In terms of biological role, quinone reductase that provides resistance to thiol-specific stress caused by electrophilic quinones. Also exhibits azoreductase activity. Catalyzes the reductive cleavage of the azo bond in aromatic azo compounds to the corresponding amines. This chain is FMN-dependent NADH:quinone oxidoreductase, found in Legionella pneumophila subsp. pneumophila (strain Philadelphia 1 / ATCC 33152 / DSM 7513).